A 258-amino-acid chain; its full sequence is Distal membrane-arm assembly complex protein 2 (258 aa).

This sequence belongs to the ATP synthase subunit s family. In terms of assembly, interacts with incompletely assembled mitochondrial NADH:ubiquinone oxidoreductase complex (complex I).

It localises to the mitochondrion. Functionally, required for the assembly of the mitochondrial NADH:ubiquinone oxidoreductase complex (complex I). Involved in the assembly of the distal region of complex I. In Mus musculus (Mouse), this protein is Distal membrane-arm assembly complex protein 2 (Dmac2).